A 223-amino-acid chain; its full sequence is Endonuclease NucS (223 aa).

Belongs to the NucS endonuclease family.

The protein resides in the cytoplasm. In terms of biological role, cleaves both 3' and 5' ssDNA extremities of branched DNA structures. This chain is Endonuclease NucS, found in Mycobacterium marinum (strain ATCC BAA-535 / M).